Here is a 262-residue protein sequence, read N- to C-terminus: 3-methyl-2-oxobutanoate hydroxymethyltransferase (262 aa).

Mg(2+)-binding residues include D42 and D81. 3-methyl-2-oxobutanoate is bound by residues 42 to 43 (DS), D81, and K110. Mg(2+) is bound at residue E112. E180 serves as the catalytic Proton acceptor.

This sequence belongs to the PanB family. In terms of assembly, homodecamer; pentamer of dimers. Mg(2+) is required as a cofactor.

It is found in the cytoplasm. The enzyme catalyses 3-methyl-2-oxobutanoate + (6R)-5,10-methylene-5,6,7,8-tetrahydrofolate + H2O = 2-dehydropantoate + (6S)-5,6,7,8-tetrahydrofolate. The protein operates within cofactor biosynthesis; (R)-pantothenate biosynthesis; (R)-pantoate from 3-methyl-2-oxobutanoate: step 1/2. In terms of biological role, catalyzes the reversible reaction in which hydroxymethyl group from 5,10-methylenetetrahydrofolate is transferred onto alpha-ketoisovalerate to form ketopantoate. The polypeptide is 3-methyl-2-oxobutanoate hydroxymethyltransferase (Legionella pneumophila (strain Lens)).